Consider the following 198-residue polypeptide: Na(+)-translocating NADH-quinone reductase subunit E (198 aa).

6 helical membrane passes run 11–31 (AVFVENMALAFFLGMCTFLAV), 35–55 (VSTAFGLGIAVTVVLGISVPA), 77–97 (FLNFITFIGVIAAIVQVLEMI), 109–129 (LGIFLPLITVNCAIFGGVSFM), 140–160 (IVYGFGSGMGWMLAIVALAGI), and 176–196 (LGITFISTGLMALGFMSFAGV).

This sequence belongs to the NqrDE/RnfAE family. As to quaternary structure, composed of six subunits; NqrA, NqrB, NqrC, NqrD, NqrE and NqrF.

It localises to the cell inner membrane. The catalysed reaction is a ubiquinone + n Na(+)(in) + NADH + H(+) = a ubiquinol + n Na(+)(out) + NAD(+). Its function is as follows. NQR complex catalyzes the reduction of ubiquinone-1 to ubiquinol by two successive reactions, coupled with the transport of Na(+) ions from the cytoplasm to the periplasm. NqrA to NqrE are probably involved in the second step, the conversion of ubisemiquinone to ubiquinol. This is Na(+)-translocating NADH-quinone reductase subunit E from Yersinia pestis bv. Antiqua (strain Nepal516).